The primary structure comprises 599 residues: ATP-dependent zinc metalloprotease FtsH 3 (599 aa).

Residues Met1–Asn7 lie on the Cytoplasmic side of the membrane. Residues Ile8–Ile28 form a helical membrane-spanning segment. The Extracellular segment spans residues Gly29–Ser128. Residues Ile129–Ala149 form a helical membrane-spanning segment. The Cytoplasmic segment spans residues Ile150–Lys599. Residue Gly214 to Thr221 coordinates ATP. Position 436 (His436) interacts with Zn(2+). Residue Glu437 is part of the active site. His440 and Asp512 together coordinate Zn(2+).

It in the central section; belongs to the AAA ATPase family. In the C-terminal section; belongs to the peptidase M41 family. As to quaternary structure, homohexamer. Zn(2+) is required as a cofactor.

Its subcellular location is the cell membrane. In terms of biological role, acts as a processive, ATP-dependent zinc metallopeptidase for both cytoplasmic and membrane proteins. Plays a role in the quality control of integral membrane proteins. This chain is ATP-dependent zinc metalloprotease FtsH 3, found in Phytoplasma mali (strain AT).